We begin with the raw amino-acid sequence, 516 residues long: Ammonium transporter Amt1 (516 aa).

Helical transmembrane passes span 17–37, 59–79, 101–121, 130–150, 170–190, 214–234, 258–278, 286–306, 307–327, 342–362, and 374–394; these read YVWI…FALL, ALGV…VGGL, IDWL…SGAV, YVVF…GLTW, LDFA…LVGA, MLLA…FNVG, VALV…VVST, PLWM…AVPH, VTWW…LPAY, VFAV…VFAV, and VAGV…VFAA. The tract at residues 426-516 is disordered; sequence IGESGPDRGV…SAAVDGGENQ (91 aa). Over residues 445-491 the composition is skewed to basic and acidic residues; that stretch reads NDVRTDGGNDVRTDGGNDVRTDGGNDVRTDGGNDVRTDGGNDVRTDG.

This sequence belongs to the ammonia transporter channel (TC 1.A.11.2) family. Homotrimer. Interacts with both GlnK1 and GlnK2 after ammonium shock. Interaction is rapid, reversible and dependent on nitrogen source.

Its subcellular location is the cell membrane. In terms of biological role, involved in the uptake of ammonium/ammonia (NH(4)(+)/NH(3)). Transport is electrogenic. The sequence is that of Ammonium transporter Amt1 from Haloferax mediterranei (strain ATCC 33500 / DSM 1411 / JCM 8866 / NBRC 14739 / NCIMB 2177 / R-4) (Halobacterium mediterranei).